Consider the following 229-residue polypeptide: 5'-methylthioadenosine/S-adenosylhomocysteine nucleosidase (229 aa).

Residue Glu-12 is the Proton acceptor of the active site. Substrate contacts are provided by residues Gly-78, Ile-152, and 173–174 (ME). Asp-197 acts as the Proton donor in catalysis.

Belongs to the PNP/UDP phosphorylase family. MtnN subfamily.

The catalysed reaction is S-adenosyl-L-homocysteine + H2O = S-(5-deoxy-D-ribos-5-yl)-L-homocysteine + adenine. The enzyme catalyses S-methyl-5'-thioadenosine + H2O = 5-(methylsulfanyl)-D-ribose + adenine. It carries out the reaction 5'-deoxyadenosine + H2O = 5-deoxy-D-ribose + adenine. The protein operates within amino-acid biosynthesis; L-methionine biosynthesis via salvage pathway; S-methyl-5-thio-alpha-D-ribose 1-phosphate from S-methyl-5'-thioadenosine (hydrolase route): step 1/2. Catalyzes the irreversible cleavage of the glycosidic bond in both 5'-methylthioadenosine (MTA) and S-adenosylhomocysteine (SAH/AdoHcy) to adenine and the corresponding thioribose, 5'-methylthioribose and S-ribosylhomocysteine, respectively. Also cleaves 5'-deoxyadenosine, a toxic by-product of radical S-adenosylmethionine (SAM) enzymes, into 5-deoxyribose and adenine. This chain is 5'-methylthioadenosine/S-adenosylhomocysteine nucleosidase, found in Haemophilus influenzae (strain PittGG).